A 336-amino-acid polypeptide reads, in one-letter code: Cell division protein ZipA (336 aa).

Residues 1 to 2 are Periplasmic-facing; the sequence is ME. Residues 3–23 form a helical membrane-spanning segment; that stretch reads LHILFFILAGLLIAVLIGFSL. Residues 24–336 are Cytoplasmic-facing; sequence WSARREKSRI…SRQSYLARVS (313 aa). Residues 57–76 are disordered; it reads SLNPQSYAQTTGQHGETEAD. Polar residues predominate over residues 59–70; it reads NPQSYAQTTGQH.

The protein belongs to the ZipA family. Interacts with FtsZ via their C-terminal domains.

Its subcellular location is the cell inner membrane. Functionally, essential cell division protein that stabilizes the FtsZ protofilaments by cross-linking them and that serves as a cytoplasmic membrane anchor for the Z ring. Also required for the recruitment to the septal ring of downstream cell division proteins. The sequence is that of Cell division protein ZipA from Actinobacillus pleuropneumoniae serotype 7 (strain AP76).